Here is a 485-residue protein sequence, read N- to C-terminus: MKNATIVMSVRREQGSSSGEGSLSFEDVAVGFTREEWQFLDQSQKVLYKEVMLENYINLVSIGYRGTKPDSLFKLEQGEPPGIAEGAAHSQICPGFVIQSRRYAGKDSDAFGGYGRSCLHIKRDKTLTGVKYHRCVKPSSPKSQLNDLQKICAGGKPHECSVCGRAFSRKAQLIQHQRTERGEKPHGCGECGKTFMRKIQLTEHQRTHTGEKPHECSECGKAFSRKSQLMVHQRTHTGEKPYRCSKCGKAFSRKCRLNRHQRSHTGEKLYGCSVCGKAFSQKAYLTAHQRLHTGDKPYKCSDCGRTFYFKSDLTRHQRIHTGEKPYECSECEKAFRSKSKLIQHQRTHTGERPYSCRECGKAFAHMSVLIKHEKTHIRETAINSLTVEKPSSRSHTSLYMSELIQEQKTVNTVPIEMPSSGTPPLLNKSERLVGRNVVIVEQPFPRNQAFVVNQEFEQRISLTNEVNVAPSVINYILYLTDIVSE.

Positions 1-21 (MKNATIVMSVRREQGSSSGEG) are disordered. Residues 23–94 (LSFEDVAVGF…EGAAHSQICP (72 aa)) enclose the KRAB domain. The C2H2-type 1; degenerate zinc finger occupies 158-180 (HECSVCGRAFSRKAQLIQHQRTE). C2H2-type zinc fingers lie at residues 186–208 (HGCG…QRTH), 214–236 (HECS…QRTH), 242–264 (YRCS…QRSH), 270–292 (YGCS…QRLH), 298–320 (YKCS…QRIH), 326–348 (YECS…QRTH), and 354–376 (YSCR…EKTH).

The protein belongs to the krueppel C2H2-type zinc-finger protein family.

Its subcellular location is the nucleus. Its function is as follows. May be involved in transcriptional regulation. The sequence is that of Zinc finger protein 577 (ZNF577) from Homo sapiens (Human).